A 497-amino-acid polypeptide reads, in one-letter code: Serine hydroxymethyltransferase (497 aa).

Residues leucine 176 and 180 to 182 each bind (6S)-5,6,7,8-tetrahydrofolate; that span reads GHL. Position 289 is an N6-(pyridoxal phosphate)lysine (lysine 289).

It belongs to the SHMT family. In terms of assembly, homodimer. The cofactor is pyridoxal 5'-phosphate.

It localises to the cytoplasm. The enzyme catalyses (6R)-5,10-methylene-5,6,7,8-tetrahydrofolate + glycine + H2O = (6S)-5,6,7,8-tetrahydrofolate + L-serine. It participates in one-carbon metabolism; tetrahydrofolate interconversion. Its pathway is amino-acid biosynthesis; glycine biosynthesis; glycine from L-serine: step 1/1. Functionally, catalyzes the reversible interconversion of serine and glycine with tetrahydrofolate (THF) serving as the one-carbon carrier. This reaction serves as the major source of one-carbon groups required for the biosynthesis of purines, thymidylate, methionine, and other important biomolecules. Also exhibits THF-independent aldolase activity toward beta-hydroxyamino acids, producing glycine and aldehydes, via a retro-aldol mechanism. In Chlamydia trachomatis serovar L2b (strain UCH-1/proctitis), this protein is Serine hydroxymethyltransferase.